Consider the following 237-residue polypeptide: Demethylmenaquinone methyltransferase (237 aa).

S-adenosyl-L-methionine-binding positions include Thr-58, Asp-79, and 106–107; that span reads NA.

The protein belongs to the class I-like SAM-binding methyltransferase superfamily. MenG/UbiE family.

It carries out the reaction a 2-demethylmenaquinol + S-adenosyl-L-methionine = a menaquinol + S-adenosyl-L-homocysteine + H(+). The protein operates within quinol/quinone metabolism; menaquinone biosynthesis; menaquinol from 1,4-dihydroxy-2-naphthoate: step 2/2. Functionally, methyltransferase required for the conversion of demethylmenaquinol (DMKH2) to menaquinol (MKH2). The sequence is that of Demethylmenaquinone methyltransferase from Listeria monocytogenes serotype 4a (strain HCC23).